Reading from the N-terminus, the 37-residue chain is Large ribosomal subunit protein bL36 (37 aa).

It belongs to the bacterial ribosomal protein bL36 family.

This is Large ribosomal subunit protein bL36 from Vesicomyosocius okutanii subsp. Calyptogena okutanii (strain HA).